The primary structure comprises 553 residues: Zinc finger protein Elbow (553 aa).

Disordered stretches follow at residues 59 to 243 (STKQ…MHSP) and 388 to 407 (GGGG…SGGS). 2 stretches are compositionally biased toward low complexity: residues 96–110 (SPVS…TGSV) and 121–134 (SSSS…TFKP). Polar residues-rich tracts occupy residues 137 to 146 (PNNNISNITT), 153 to 173 (TNLS…KSMT), and 224 to 236 (TAST…NSKE). Positions 287 to 480 (SASAAAAAAS…PDAVLSAAAA (194 aa)) are self-association. Positions 287–553 (SASAAAAAAS…YGPRMGSSHP (267 aa)) are interaction with noc. Positions 388 to 406 (GGGGGGSSKSSGSQGGSGG) are enriched in gly residues. The segment at 437–466 (YVCSWIGSDAAYCGKRFGTSDDLFQHLRTH) adopts a C2H2-type zinc-finger fold.

It belongs to the Elbow/Noc family. Self-associates. Interacts with gro and noc.

May negatively regulate Notch-induced cell proliferation in the eye-head primordium. May act in leg and wing primordia to negatively regulate body-wall specifying genes and thereby promote appendage formation. Required for tracheal development. The polypeptide is Zinc finger protein Elbow (elB) (Drosophila melanogaster (Fruit fly)).